Here is a 486-residue protein sequence, read N- to C-terminus: Argininosuccinate lyase (486 aa).

This sequence belongs to the lyase 1 family. Argininosuccinate lyase subfamily.

It is found in the cytoplasm. The enzyme catalyses 2-(N(omega)-L-arginino)succinate = fumarate + L-arginine. The protein operates within amino-acid biosynthesis; L-arginine biosynthesis; L-arginine from L-ornithine and carbamoyl phosphate: step 3/3. The polypeptide is Argininosuccinate lyase (Acidobacterium capsulatum (strain ATCC 51196 / DSM 11244 / BCRC 80197 / JCM 7670 / NBRC 15755 / NCIMB 13165 / 161)).